We begin with the raw amino-acid sequence, 280 residues long: MDRRWKVMTDQTASSELRVAIAGLGSIGTKIAAALDQGEGLTLSAVAVRDPAKHQAFLNGLRRPPQVLPIDQLGEAADIVVECAPSSQLRAIVEPAVKRGKAAVVVSVGGLLDNFDLVDLARANGGRIIVPTGALIGLDAVNAAVIGTIHSVKMVTRKPIDGLKGAPFIVHNNIDIDTLREPLKLFEGTAREAAKGFPANLNVAVALSLAGVGPDRTSVQIWADPTVTRNVHRIEVEADSARFSMSIENIPSENPKTGLITALSVIALLRKQRATLCVGT.

2 residues coordinate NAD(+): Ala134 and Asn202. Residue His232 is part of the active site.

This sequence belongs to the L-aspartate dehydrogenase family.

It carries out the reaction L-aspartate + NADP(+) + H2O = oxaloacetate + NH4(+) + NADPH + H(+). It catalyses the reaction L-aspartate + NAD(+) + H2O = oxaloacetate + NH4(+) + NADH + H(+). It participates in cofactor biosynthesis; NAD(+) biosynthesis; iminoaspartate from L-aspartate (dehydrogenase route): step 1/1. Its function is as follows. Specifically catalyzes the NAD or NADP-dependent dehydrogenation of L-aspartate to iminoaspartate. This is L-aspartate dehydrogenase from Bradyrhizobium diazoefficiens (strain JCM 10833 / BCRC 13528 / IAM 13628 / NBRC 14792 / USDA 110).